We begin with the raw amino-acid sequence, 311 residues long: Methionyl-tRNA formyltransferase (311 aa).

112-115 serves as a coordination point for (6S)-5,6,7,8-tetrahydrofolate; it reads SLLP.

It belongs to the Fmt family.

The enzyme catalyses L-methionyl-tRNA(fMet) + (6R)-10-formyltetrahydrofolate = N-formyl-L-methionyl-tRNA(fMet) + (6S)-5,6,7,8-tetrahydrofolate + H(+). Attaches a formyl group to the free amino group of methionyl-tRNA(fMet). The formyl group appears to play a dual role in the initiator identity of N-formylmethionyl-tRNA by promoting its recognition by IF2 and preventing the misappropriation of this tRNA by the elongation apparatus. The chain is Methionyl-tRNA formyltransferase from Chelativorans sp. (strain BNC1).